The chain runs to 169 residues: Ureidoglycolate lyase (169 aa).

It belongs to the ureidoglycolate lyase family. Homodimer. It depends on Ni(2+) as a cofactor.

The enzyme catalyses (S)-ureidoglycolate = urea + glyoxylate. The protein operates within nitrogen metabolism; (S)-allantoin degradation. Catalyzes the catabolism of the allantoin degradation intermediate (S)-ureidoglycolate, generating urea and glyoxylate. Involved in the utilization of allantoin as nitrogen source. This is Ureidoglycolate lyase from Pseudomonas aeruginosa (strain LESB58).